The following is a 255-amino-acid chain: Sporulation-specific N-acetylmuramoyl-L-alanine amidase (255 aa).

The 169-residue stretch at 4–172 (IFIDPGHGGS…LARGHANGLE (169 aa)) folds into the MurNAc-LAA domain. Zn(2+)-binding residues include His10, Glu24, and His79. The active site involves Glu141. The SPOR domain maps to 180–254 (TSSSGLYKVQ…AGFDAIVILE (75 aa)). 2 consecutive repeat copies span residues 184 to 219 (GLYKVQIGAFKVKANADSLASNAEAKGFDSIVLLKD) and 220 to 255 (GLYKVQIGAFSSKDNADTLAARAKNAGFDAIVILES). The segment at 184 to 255 (GLYKVQIGAF…GFDAIVILES (72 aa)) is 2 X 35 AA approximate tandem repeats.

Belongs to the N-acetylmuramoyl-L-alanine amidase 3 family. It depends on Zn(2+) as a cofactor.

The protein localises to the secreted. It localises to the cell wall. The enzyme catalyses Hydrolyzes the link between N-acetylmuramoyl residues and L-amino acid residues in certain cell-wall glycopeptides.. Inhibited by EDTA. Its function is as follows. Autolysins are involved in some important biological processes such as cell separation, cell-wall turnover, competence for genetic transformation, formation of the flagella - in particular of its basal body - and sporulation. CwlC is able to hydrolyze type A cell walls such as B.subtilis. Its main function is to lyze the mother cell wall peptidoglycan, playing a role during sporulation. The protein is Sporulation-specific N-acetylmuramoyl-L-alanine amidase (cwlC) of Bacillus subtilis (strain 168).